The chain runs to 252 residues: Phosphoglycolate phosphatase (252 aa).

Catalysis depends on Asp-13, which acts as the Nucleophile. The Mg(2+) site is built by Asp-13, Asp-15, and Asp-192.

It belongs to the HAD-like hydrolase superfamily. CbbY/CbbZ/Gph/YieH family. As to quaternary structure, monomer. The cofactor is Mg(2+). Chloride serves as cofactor.

It catalyses the reaction 2-phosphoglycolate + H2O = glycolate + phosphate. It participates in organic acid metabolism; glycolate biosynthesis; glycolate from 2-phosphoglycolate: step 1/1. In terms of biological role, specifically catalyzes the dephosphorylation of 2-phosphoglycolate. Is involved in the dissimilation of the intracellular 2-phosphoglycolate formed during the DNA repair of 3'-phosphoglycolate ends, a major class of DNA lesions induced by oxidative stress. The chain is Phosphoglycolate phosphatase from Salmonella paratyphi A (strain ATCC 9150 / SARB42).